Here is a 681-residue protein sequence, read N- to C-terminus: Pumilio domain-containing protein C6G9.14 (681 aa).

2 disordered regions span residues 180-210 (RPGL…PGLI) and 273-322 (ASTA…NVPS). 2 stretches are compositionally biased toward low complexity: residues 187 to 210 (TPGP…PGLI) and 273 to 286 (ASTA…SSGS). The 341-residue stretch at 319–659 (NVPSLISDDP…RILSKLERRH (341 aa)) folds into the PUM-HD domain. Pumilio repeat units follow at residues 342–378 (SLQN…AVFA), 379–414 (ETHP…TFIQ), 415–451 (IIAP…CIVN), 452–487 (ALRP…FIFD), 488–523 (AICE…QLVE), 524–559 (HIVP…AIIS), 560–595 (YFLY…KLIS), and 596–633 (ELMD…ELVE). The segment covering 656 to 666 (ERRHPSSKEKP) has biased composition (basic and acidic residues). The interval 656–681 (ERRHPSSKEKPIVYSNSERVNTSSSA) is disordered. The span at 669-681 (YSNSERVNTSSSA) shows a compositional bias: polar residues.

This is Pumilio domain-containing protein C6G9.14 from Schizosaccharomyces pombe (strain 972 / ATCC 24843) (Fission yeast).